The sequence spans 469 residues: tRNA(Ile)-lysidine synthase (469 aa).

26-31 lines the ATP pocket; it reads SGGPDS.

It belongs to the tRNA(Ile)-lysidine synthase family.

The protein localises to the cytoplasm. The catalysed reaction is cytidine(34) in tRNA(Ile2) + L-lysine + ATP = lysidine(34) in tRNA(Ile2) + AMP + diphosphate + H(+). In terms of biological role, ligates lysine onto the cytidine present at position 34 of the AUA codon-specific tRNA(Ile) that contains the anticodon CAU, in an ATP-dependent manner. Cytidine is converted to lysidine, thus changing the amino acid specificity of the tRNA from methionine to isoleucine. In Clostridium perfringens (strain ATCC 13124 / DSM 756 / JCM 1290 / NCIMB 6125 / NCTC 8237 / Type A), this protein is tRNA(Ile)-lysidine synthase.